The chain runs to 467 residues: Transcriptional regulator of yeast form adherence 6 (467 aa).

The span at 43 to 52 (NTSDAGSIPT) shows a compositional bias: polar residues. Disordered stretches follow at residues 43 to 83 (NTSD…NIDS), 128 to 149 (GSSG…NSNN), 245 to 275 (ESPE…SNSS), 312 to 365 (NNQL…SGSK), and 390 to 439 (STLN…DNDR). A bHLH domain is found at 92 to 173 (ETKQLHSIIE…KSSVEYILYL (82 aa)). Composition is skewed to low complexity over residues 257-275 (VSET…SNSS) and 312-322 (NNQLNNRKNSN). The span at 323 to 338 (PISPQTVCIKSQNPSP) shows a compositional bias: polar residues. The segment covering 345–365 (SSLSTSIVNSPSSSSSLSGSK) has biased composition (low complexity). A compositionally biased stretch (polar residues) spans 417-432 (GSANTETVNSGSASSD).

The protein resides in the nucleus. Functionally, transcription factor required for yeast cell adherence to silicone substrate. The polypeptide is Transcriptional regulator of yeast form adherence 6 (TRY6) (Candida albicans (strain SC5314 / ATCC MYA-2876) (Yeast)).